The sequence spans 159 residues: Large ribosomal subunit protein mL50 (159 aa).

This sequence belongs to the mitochondrion-specific ribosomal protein mL50 family. In terms of assembly, component of the mitochondrial ribosome large subunit (39S) which comprises a 16S rRNA and about 50 distinct proteins.

Its subcellular location is the mitochondrion. The chain is Large ribosomal subunit protein mL50 (Mrpl50) from Mus musculus (Mouse).